A 555-amino-acid chain; its full sequence is Membrane protein insertase YidC (555 aa).

A helical transmembrane segment spans residues 7–24 (ILWVIFSMSLVLLYDNWQ). The interval 62-81 (APGAAGTAAPAAPQAAAQPT) is disordered. Helical transmembrane passes span 334–354 (LELVKDYGWLTILAKPLFWLL), 360–380 (FLGNWGWSIIALTVLIKLVFF), 430–450 (LGGCLPIVIQIPVFIALYWVL), 468–488 (LSVPDPFYILPIVMAVSMFVQ), and 503–523 (VMMIMPLVFSVMFFFFPAGLV).

This sequence belongs to the OXA1/ALB3/YidC family. Type 1 subfamily. In terms of assembly, interacts with the Sec translocase complex via SecD. Specifically interacts with transmembrane segments of nascent integral membrane proteins during membrane integration.

The protein resides in the cell inner membrane. In terms of biological role, required for the insertion and/or proper folding and/or complex formation of integral membrane proteins into the membrane. Involved in integration of membrane proteins that insert both dependently and independently of the Sec translocase complex, as well as at least some lipoproteins. Aids folding of multispanning membrane proteins. The polypeptide is Membrane protein insertase YidC (Cupriavidus necator (strain ATCC 17699 / DSM 428 / KCTC 22496 / NCIMB 10442 / H16 / Stanier 337) (Ralstonia eutropha)).